The chain runs to 235 residues: Protein MAINTENANCE OF PSII UNDER HIGH LIGHT 1 (235 aa).

The chain crosses the membrane as a helical span at residues 127 to 147 (TAAIVAGIALIAVAAASSILL). Residues 181–235 (QPSTPSVTEAPPVAELETSLPETPSVAQQETSLPETMASEAQPEASSVPTTSSTS) form a disordered region. Composition is skewed to polar residues over residues 200-214 (LPET…TSLP) and 224-235 (EASSVPTTSSTS).

In terms of assembly, interacts with psbA, psbB, psbC and psbD.

It is found in the plastid. Its subcellular location is the chloroplast thylakoid membrane. Its function is as follows. Interacts with photosystem II (PSII) core complexes and participates in the maintenance of normal PSII activity under photoinhibitory stress. May protect against photodamage or stabilize PSII under high-light stress. Participates in the maintainance of proper PSII function under high-light stress by protecting PSII from photooxidative damage. The protein is Protein MAINTENANCE OF PSII UNDER HIGH LIGHT 1 of Arabidopsis thaliana (Mouse-ear cress).